Reading from the N-terminus, the 191-residue chain is Molybdenum cofactor guanylyltransferase (191 aa).

Residues 13–15 (LAG), Lys26, Asp72, and Asp102 contribute to the GTP site. Mg(2+) is bound at residue Asp102.

This sequence belongs to the MobA family. Monomer. It depends on Mg(2+) as a cofactor.

It is found in the cytoplasm. The enzyme catalyses Mo-molybdopterin + GTP + H(+) = Mo-molybdopterin guanine dinucleotide + diphosphate. Its function is as follows. Transfers a GMP moiety from GTP to Mo-molybdopterin (Mo-MPT) cofactor (Moco or molybdenum cofactor) to form Mo-molybdopterin guanine dinucleotide (Mo-MGD) cofactor. The chain is Molybdenum cofactor guanylyltransferase from Pseudomonas putida (strain GB-1).